The primary structure comprises 118 residues: UPF0342 protein BpOF4_11360 (118 aa).

The protein belongs to the UPF0342 family.

The polypeptide is UPF0342 protein BpOF4_11360 (Alkalihalophilus pseudofirmus (strain ATCC BAA-2126 / JCM 17055 / OF4) (Bacillus pseudofirmus)).